The chain runs to 241 residues: Small ribosomal subunit protein uS2 (241 aa).

This sequence belongs to the universal ribosomal protein uS2 family.

The chain is Small ribosomal subunit protein uS2 from Yersinia enterocolitica serotype O:8 / biotype 1B (strain NCTC 13174 / 8081).